The following is a 225-amino-acid chain: Endoglucanase (225 aa).

A signal peptide spans 1 to 15; it reads MKVFVVLAAIVAIAN. The Nucleophile role is filled by D29. Disulfide bonds link C30–C152, C31–C66, C35–C103, C50–C74, C104–C219, C106–C209, and C176–C187. An N-linked (GlcNAc...) asparagine glycan is attached at N55. D138 acts as the Proton donor in catalysis.

The protein belongs to the glycosyl hydrolase 45 (cellulase K) family. In terms of processing, N- and O-glycosylated. Contains hybrid- and complex-type N-glycans.

The protein localises to the secreted. It carries out the reaction Endohydrolysis of (1-&gt;4)-beta-D-glucosidic linkages in cellulose, lichenin and cereal beta-D-glucans.. Its activity is regulated as follows. Activity is not affected by metal ions except Mn(2+), which reduces the activity by 40-50%. However, no significant change in activity in response to 1 mM EDTA. Its function is as follows. Hydrolyzes carboxymethylcellulose (CMC). Also hydrolyzes lichenan and barley beta-1,4-D-glucan. CMC is hydrolyzed majorily to cellobiose (G2), cellotriose (G3) and cellotetraose (G4). Cellohexaose (G6) is hydrolyzed to G4 and G2 with traces of G3. Cellopentaose (G5) is completely hydrolyzed to G2 and G3, and G4 is partially hydrolyzed to G2. Does not hydrolyze G2 or G3. Does not hydrolyze crystalline cellulose, soluble starch, xylan, mannan or laminarin. The sequence is that of Endoglucanase from Cryptopygus antarcticus (Antarctic springtail).